The primary structure comprises 273 residues: Vacuolar membrane protein YPL162C (273 aa).

Residues 1–13 (MYVSNGKDTCQLL) are Vacuolar-facing. Residues 14-34 (GPVSLFVQTLMGMTAVIVLLV) form a helical membrane-spanning segment. At 35-51 (KRNYEHPRRKMIVWSYD) the chain is on the cytoplasmic side. The chain crosses the membrane as a helical span at residues 52–72 (IGKQIIGSLGIHFLNLGISIL). Residues 73-97 (KKRRRSLFAITAKGNDDEDQCDWYF) are Vacuolar-facing. A helical membrane pass occupies residues 98-118 (LNLLLDTTVGIPILWLCLYII). At 119–156 (EKVLKSLHFQNIESGNYFPSKTVGSHPRKPLFSAFVKQ) the chain is on the cytoplasmic side. The chain crosses the membrane as a helical span at residues 157 to 177 (LLIFIVGLGVMKFCVFLILNY). The Vacuolar portion of the chain corresponds to 178–198 (LEDLAYWFADLILGWSDSWPN). A helical transmembrane segment spans residues 199–219 (FQVFLVMFVFPILLNCFQYFC). Topologically, residues 220–273 (VDNVIRLHSESLTITNAENFETNTFLNDEIPDLSEVSNEVPNKDNNISSYGSII) are cytoplasmic.

The protein resides in the vacuole membrane. The polypeptide is Vacuolar membrane protein YPL162C (Saccharomyces cerevisiae (strain ATCC 204508 / S288c) (Baker's yeast)).